The primary structure comprises 136 residues: Ig heavy chain V region BCL1 (136 aa).

A signal peptide spans 1–19 (MGWSCIIFFLVATATGVHS). Residues 20 to 135 (QVQLQQSGPE…WGQGTTLTVS (116 aa)) form the Ig-like domain.

The protein is Ig heavy chain V region BCL1 of Mus musculus (Mouse).